A 182-amino-acid chain; its full sequence is Large ribosomal subunit protein uL5 (182 aa).

It belongs to the universal ribosomal protein uL5 family. Part of the 50S ribosomal subunit; part of the 5S rRNA/L5/L18/L25 subcomplex. Contacts the 5S rRNA and the P site tRNA. Forms a bridge to the 30S subunit in the 70S ribosome.

Its function is as follows. This is one of the proteins that bind and probably mediate the attachment of the 5S RNA into the large ribosomal subunit, where it forms part of the central protuberance. In the 70S ribosome it contacts protein S13 of the 30S subunit (bridge B1b), connecting the 2 subunits; this bridge is implicated in subunit movement. Contacts the P site tRNA; the 5S rRNA and some of its associated proteins might help stabilize positioning of ribosome-bound tRNAs. This chain is Large ribosomal subunit protein uL5, found in Borrelia duttonii (strain Ly).